Consider the following 520-residue polypeptide: Peptide chain release factor 3 (520 aa).

The tr-type G domain maps to 8–277 (ESRKTFAIIS…FAPMPNARQT (270 aa)). GTP-binding positions include 17-24 (SHPDAGKT), 85-89 (DTPGH), and 139-142 (NKLD).

It belongs to the TRAFAC class translation factor GTPase superfamily. Classic translation factor GTPase family. PrfC subfamily.

The protein resides in the cytoplasm. Functionally, increases the formation of ribosomal termination complexes and stimulates activities of RF-1 and RF-2. It binds guanine nucleotides and has strong preference for UGA stop codons. It may interact directly with the ribosome. The stimulation of RF-1 and RF-2 is significantly reduced by GTP and GDP, but not by GMP. The protein is Peptide chain release factor 3 of Staphylococcus aureus (strain JH1).